The primary structure comprises 1545 residues: Dual oxidase 2 (1545 aa).

Residues 1–25 (MLCIRPEALVLLGALLTVPLDPVGG) form the signal peptide. Residues 26-601 (QDALSLTWEV…EGSGPGFGIT (576 aa)) lie on the Extracellular side of the membrane. The segment at 30–596 (SLTWEVQRYD…VIQYFEGSGP (567 aa)) is peroxidase-like; mediates peroxidase activity. N-linked (GlcNAc...) asparagine glycans are attached at residues asparagine 100, asparagine 312, asparagine 348, asparagine 358, asparagine 455, and asparagine 549. Residues cysteine 124 and cysteine 1159 are joined by a disulfide bond. Residues 602 to 622 (IVALCCLPLMSLLISGVVAYF) form a helical membrane-spanning segment. Over 623–1037 (RSRERKKLQK…YKRFVENYRR (415 aa)) the chain is Cytoplasmic. EF-hand domains follow at residues 819–854 (PQDM…FMKG), 855–890 (SPED…FIEI), and 899–934 (QLTE…HDSE). Residues aspartate 832, aspartate 834, asparagine 836, tyrosine 838, glutamate 843, aspartate 868, aspartate 870, asparagine 872, and glutamate 879 each contribute to the Ca(2+) site. Residues 960 to 1242 (RVSFIIRTPE…GSFALIQLPR (283 aa)) form an interaction with TXNDC11 region. A helical transmembrane segment spans residues 1038-1058 (HIVCVAIFSAICAGLFVERAY). Residues 1059 to 1074 (YYAFVSPPSGIAETTF) lie on the Extracellular side of the membrane. Residues 1075-1097 (VGIILSRGTAASVSFMFSYILLT) traverse the membrane as a helical segment. Residues 1081 to 1263 (RGTAASVSFM…YVGDKLVSLS (183 aa)) enclose the Ferric oxidoreductase domain. At 1098–1125 (MCRNLITFLRETFLNHYVPFDAAVDFHR) the chain is on the cytoplasmic side. A helical membrane pass occupies residues 1126 to 1148 (WIAMAALVLAILHSVGHVVNVYI). The Extracellular segment spans residues 1149–1182 (FSVSPLSLLACVFPSVFVNDGSKLPQKFYWWFFQ). A helical transmembrane segment spans residues 1183–1203 (TIPGMTGVLLLVVLAIMYVFA). The Cytoplasmic segment spans residues 1204–1220 (SPYFRRRSFRGFWLTHH). The helical transmembrane segment at 1221-1241 (FYILLYVLLIIHGSFALIQLP) threads the bilayer. Position 1242 (arginine 1242) is a topological domain, extracellular. Residues 1243–1263 (FHIFFLVPALIYVGDKLVSLS) traverse the membrane as a helical segment. One can recognise an FAD-binding FR-type domain in the interval 1264–1370 (RKKVEISVVK…DGPFGEGHQE (107 aa)). The Cytoplasmic portion of the chain corresponds to 1264-1545 (RKKVEISVVK…THFVHHYENF (282 aa)).

In the N-terminal section; belongs to the peroxidase family. Heterodimer with DUOXA2; disulfide-linked. Interacts with TXNDC11, TPO and CYBA. In terms of processing, N-glycosylated. Expressed in thyroid, and the digestive tract especially in stomach, cecum and sigmoidal colon (at protein level). Expressed in thyroid.

It is found in the apical cell membrane. The protein resides in the cell junction. The enzyme catalyses NADH + O2 + H(+) = H2O2 + NAD(+). It carries out the reaction NADPH + O2 + H(+) = H2O2 + NADP(+). It functions in the pathway hormone biosynthesis; thyroid hormone biosynthesis. The NADPH oxidase activity is calcium-dependent. Peroxidase activity is inhibited by aminobenzohydrazide. In terms of biological role, generates hydrogen peroxide which is required for the activity of thyroid peroxidase/TPO and lactoperoxidase/LPO. Plays a role in thyroid hormones synthesis and lactoperoxidase-mediated antimicrobial defense at the surface of mucosa. May have its own peroxidase activity through its N-terminal peroxidase-like domain. The protein is Dual oxidase 2 (DUOX2) of Sus scrofa (Pig).